The following is a 237-amino-acid chain: MLSLRSLLPHLGLFLCLALHLSPSLSASDNGSCVVLDNIYTSDILEISTMANVSGGDVTYTVTVPVNDSVSAVILKAVKEDDSPVGTWSGTYEKCNDSSVYYNLTSQSQSVFQTNWTVPTSEDVTKVNLQVLIVVNRTASKSSVKMEQVQPSASTPIPESSETSQTINTTPTVNTAKTTAKDTANTTAVTTANTTANTTAVTTAKTTAKSLAIRTLGSPLAGALHILLVFLISKLLF.

A signal peptide spans 1–27; that stretch reads MLSLRSLLPHLGLFLCLALHLSPSLSA. 4 N-linked (GlcNAc...) asparagine glycosylation sites follow: Asn-30, Asn-67, Asn-103, and Asn-136. Positions 145 to 162 are enriched in polar residues; sequence KMEQVQPSASTPIPESSE. A disordered region spans residues 145 to 170; that stretch reads KMEQVQPSASTPIPESSETSQTINTT. Ser-218 carries GPI-anchor amidated serine lipidation. Residues 219–237 constitute a propeptide, removed in mature form; sequence PLAGALHILLVFLISKLLF.

N-glycosylated. Post-translationally, GPI-anchored. In terms of tissue distribution, present in hair follicle cells and sebaceous gland of skin, ciliated epithelial cells of trachea and bronchial tube, striated portion of submandibular gland, distal convoluted tubule cells of kidney, ciliated epithelial cells of oviduct, medulla of adrenal gland and anterior lobe of pituitary gland. Expressed in keratinocytes of the hair follicle at the trichilemmal zone corresponding to the terminally differentiated outermost suprabasal outer root sheath (ORS), including that of the sebaceous gland duct (SGD) and the directly adjacent upper distal end of the companion layer (CL). Expression is similar in all hair follicle growth stages. Also detected during both the early and late anagen phases above the bulge of stem cells. Expressed at the leading edge of the epidermal wound. Not expressed in the interfollicular epidermis (IFE), inner root sheath (IRS) and hair fiber. Highly expressed in placenta. Detected in mammary and prostate epithelia and in the pancreas (at protein level).

It localises to the apical cell membrane. Functionally, modulates leading keratinocyte migration and cellular adhesion to matrix proteins during a wound-healing response and promotes wound repair. May play a role during trichilemmal differentiation of the hair follicle. The polypeptide is Placenta-expressed transcript 1 protein (Plet1) (Mus musculus (Mouse)).